A 570-amino-acid polypeptide reads, in one-letter code: CDKN2A-interacting protein (570 aa).

A2 is modified (N-acetylalanine). The XRN2-binding (XTBD) domain maps to 19–126; the sequence is VETLRCEGET…KVKKRGISSS (108 aa). The interval 122 to 345 is disordered; that stretch reads GISSSNEGVE…TSLLMPKSSS (224 aa). At S124 the chain carries Phosphoserine. Residues 147 to 162 show a composition bias toward basic and acidic residues; the sequence is VERDHGKKSAKTDRSA. Residues 167 to 183 show a composition bias toward low complexity; that stretch reads SSGSKGSSTKSESSGTS. A Glycyl lysine isopeptide (Lys-Gly) (interchain with G-Cter in SUMO1) cross-link involves residue K176. The segment covering 184-198 has biased composition (polar residues); it reads ARSNSGVSHQNSSTS. The segment covering 203–221 has biased composition (low complexity); the sequence is SVCSQSSSNSSQVTSAGSG. A compositionally biased stretch (basic and acidic residues) spans 224-233; that stretch reads SEPEAPDKHG. Position 234 is a phosphoserine (S234). Composition is skewed to low complexity over residues 234-248 and 271-301; these read SASF…SLNS and SSVS…PLLS. The span at 302 to 317 shows a compositional bias: polar residues; the sequence is CKSSSETASSGLTTKA. A compositionally biased stretch (low complexity) spans 318-345; it reads SSEANISSSVSKNSSSSGTSLLMPKSSS. S378 carries the phosphoserine modification. Positions 383-407 are disordered; it reads SQLASKSSSQSSTSQLPSKSTSQSS. The 76-residue stretch at 452–527 folds into the DRBM domain; that stretch reads NHGELLNAAI…SREALKLFLK (76 aa).

It belongs to the CARF family. As to quaternary structure, interacts with CDKN2A/p14ARF, p53/TP53 and MDM2. Interacts with CHEK2 and MAPK3. Interacts with XRN2. Post-translationally, may be ubiquitinated.

It is found in the nucleus. The protein localises to the nucleoplasm. Functionally, regulates DNA damage response and cell proliferation in a dose-dependent manner through a number of signaling pathways involved in cell proliferation, apoptosis and senescence. In Rattus norvegicus (Rat), this protein is CDKN2A-interacting protein (Cdkn2aip).